The following is a 383-amino-acid chain: S-adenosylmethionine synthase (383 aa).

Residue H15 coordinates ATP. Residue D17 participates in Mg(2+) binding. E43 contributes to the K(+) binding site. Residues E56 and Q99 each contribute to the L-methionine site. Residues 99–109 (QSPDINQGVDR) form a flexible loop region. Residues 164 to 166 (DAK), 230 to 231 (RF), D239, 245 to 246 (RK), A262, and K266 each bind ATP. Residue D239 participates in L-methionine binding. K270 is a binding site for L-methionine.

This sequence belongs to the AdoMet synthase family. Homotetramer; dimer of dimers. Requires Mg(2+) as cofactor. It depends on K(+) as a cofactor.

It localises to the cytoplasm. It catalyses the reaction L-methionine + ATP + H2O = S-adenosyl-L-methionine + phosphate + diphosphate. Its pathway is amino-acid biosynthesis; S-adenosyl-L-methionine biosynthesis; S-adenosyl-L-methionine from L-methionine: step 1/1. Functionally, catalyzes the formation of S-adenosylmethionine (AdoMet) from methionine and ATP. The overall synthetic reaction is composed of two sequential steps, AdoMet formation and the subsequent tripolyphosphate hydrolysis which occurs prior to release of AdoMet from the enzyme. The protein is S-adenosylmethionine synthase of Shewanella sp. (strain ANA-3).